The chain runs to 259 residues: Bidirectional sugar transporter SWEET6a (259 aa).

The Extracellular segment spans residues 1–9 (MISPDAARN). A helical transmembrane segment spans residues 10–30 (VVGIIGNVISFGLFLAPVPTF). The MtN3/slv 1 domain occupies 10-98 (VVGIIGNVIS…IFFLYSPNKK (89 aa)). Topologically, residues 31–45 (WRICKRKDVEEFKAD) are cytoplasmic. Residues 46–66 (PYLATLLNCMLWVFYGIPVVH) traverse the membrane as a helical segment. The Extracellular segment spans residues 67-69 (PNS). A helical transmembrane segment spans residues 70-90 (ILVVTINGIGLLVEGTYLLIF). The Cytoplasmic segment spans residues 91–103 (FLYSPNKKRLRMC). A helical transmembrane segment spans residues 104–124 (AVLGVELVFMLAVILGVLLGA). Residues 125-131 (HTHEKRS) lie on the Extracellular side of the membrane. A helical membrane pass occupies residues 132–152 (MIVGILCVFFGSIMYFSPLTI). A MtN3/slv 2 domain is found at 133–216 (IVGILCVFFG…LILYACYYRT (84 aa)). Topologically, residues 153 to 165 (MGKVIKTKSVEYM) are cytoplasmic. Residues 166–186 (PFFLSLVCFLNGVCWTAYALI) form a helical membrane-spanning segment. At 187 to 189 (RFD) the chain is on the extracellular side. A helical membrane pass occupies residues 190 to 210 (IYVTIPNGLGALFGAIQLILY). The Cytoplasmic portion of the chain corresponds to 211-259 (ACYYRTTPKKTKAAKDVEMPSVVVSGTGAAAAAGGGNTGGGSISVTVER).

It belongs to the SWEET sugar transporter family. As to quaternary structure, forms homooligomers and/or heterooligomers.

It is found in the cell membrane. Its function is as follows. Mediates both low-affinity uptake and efflux of sugar across the plasma membrane. This is Bidirectional sugar transporter SWEET6a (SWEET6A) from Oryza sativa subsp. indica (Rice).